Here is a 317-residue protein sequence, read N- to C-terminus: Adenine deaminase (317 aa).

3 residues coordinate Zn(2+): His14, His16, and His194. Residue Glu197 is the Proton donor of the active site. Asp275 is a Zn(2+) binding site. Asp276 contacts substrate.

It belongs to the metallo-dependent hydrolases superfamily. Adenosine and AMP deaminases family. Adenine deaminase type 2 subfamily. It depends on Zn(2+) as a cofactor.

The catalysed reaction is adenine + H2O + H(+) = hypoxanthine + NH4(+). Its function is as follows. Catalyzes the hydrolytic deamination of adenine to hypoxanthine. Plays an important role in the purine salvage pathway and in nitrogen catabolism. The sequence is that of Adenine deaminase from Bordetella bronchiseptica (strain ATCC BAA-588 / NCTC 13252 / RB50) (Alcaligenes bronchisepticus).